The chain runs to 451 residues: Phosphoglucosamine mutase (451 aa).

S101 (phosphoserine intermediate) is an active-site residue. Positions 101, 240, 242, and 244 each coordinate Mg(2+). S101 carries the post-translational modification Phosphoserine.

The protein belongs to the phosphohexose mutase family. The cofactor is Mg(2+). Post-translationally, activated by phosphorylation.

It carries out the reaction alpha-D-glucosamine 1-phosphate = D-glucosamine 6-phosphate. Its function is as follows. Catalyzes the conversion of glucosamine-6-phosphate to glucosamine-1-phosphate. The polypeptide is Phosphoglucosamine mutase (Streptococcus pyogenes serotype M18 (strain MGAS8232)).